We begin with the raw amino-acid sequence, 232 residues long: Ubiquinone biosynthesis O-methyltransferase (232 aa).

Positions 36, 55, 76, and 120 each coordinate S-adenosyl-L-methionine.

Belongs to the methyltransferase superfamily. UbiG/COQ3 family.

It carries out the reaction a 3-demethylubiquinol + S-adenosyl-L-methionine = a ubiquinol + S-adenosyl-L-homocysteine + H(+). It catalyses the reaction a 3-(all-trans-polyprenyl)benzene-1,2-diol + S-adenosyl-L-methionine = a 2-methoxy-6-(all-trans-polyprenyl)phenol + S-adenosyl-L-homocysteine + H(+). It participates in cofactor biosynthesis; ubiquinone biosynthesis. In terms of biological role, O-methyltransferase that catalyzes the 2 O-methylation steps in the ubiquinone biosynthetic pathway. This is Ubiquinone biosynthesis O-methyltransferase from Chromobacterium violaceum (strain ATCC 12472 / DSM 30191 / JCM 1249 / CCUG 213 / NBRC 12614 / NCIMB 9131 / NCTC 9757 / MK).